Consider the following 496-residue polypeptide: NAD(P)H-quinone oxidoreductase subunit 2, chloroplastic (496 aa).

The next 14 membrane-spanning stretches (helical) occupy residues 14-34 (SFLPEGILIFNIIFILILDLV), 42-62 (MLVKISFIGLLLSMLTLIQQW), 79-99 (FTTCFRLIISLCCILCIPLSF), 109-129 (LTEFIIFLLFTTLGAMILSSA), 133-153 (ITIFISLECLGLGSYLLTGYV), 167-187 (LIIGGTSSSIFAYGLSWLYGL), 210-230 (LASWFAYICIIVGIGFKLSLV), 244-264 (PTPVVAFLSIISKAGALALTI), 281-301 (ILQILAILSMIVGNLLAMVET), 305-325 (RILTYSSIAQAGYLLIGIVAG), 334-354 (LVYMIFYLFMNIGAFSCIILF), 377-397 (ASCLSLCLLSLAGIPPLTGFF), 400-420 (ILLFWSAWQSGFYFLVMTGIF), and 469-489 (IYLCTFISGFVGIFMNPVIYF).

This sequence belongs to the complex I subunit 2 family. As to quaternary structure, NDH is composed of at least 16 different subunits, 5 of which are encoded in the nucleus.

It is found in the plastid. Its subcellular location is the chloroplast thylakoid membrane. The catalysed reaction is a plastoquinone + NADH + (n+1) H(+)(in) = a plastoquinol + NAD(+) + n H(+)(out). It carries out the reaction a plastoquinone + NADPH + (n+1) H(+)(in) = a plastoquinol + NADP(+) + n H(+)(out). Functionally, NDH shuttles electrons from NAD(P)H:plastoquinone, via FMN and iron-sulfur (Fe-S) centers, to quinones in the photosynthetic chain and possibly in a chloroplast respiratory chain. The immediate electron acceptor for the enzyme in this species is believed to be plastoquinone. Couples the redox reaction to proton translocation, and thus conserves the redox energy in a proton gradient. The protein is NAD(P)H-quinone oxidoreductase subunit 2, chloroplastic of Chara vulgaris (Common stonewort).